A 324-amino-acid polypeptide reads, in one-letter code: Phospho-N-acetylmuramoyl-pentapeptide-transferase (324 aa).

10 helical membrane passes run 5–25, 52–72, 77–97, 122–142, 149–169, 176–196, 201–221, 227–247, 253–273, and 302–322; these read GLLV…PLFI, PTMG…IMAI, LGAE…IGFL, VIAI…YIMI, FELG…GSNA, LDGL…IIAV, FGVA…LVFN, VFMG…VAIL, LLVI…IQVI, and VVVT…YIGV.

Belongs to the glycosyltransferase 4 family. MraY subfamily. The cofactor is Mg(2+).

Its subcellular location is the cell membrane. It catalyses the reaction UDP-N-acetyl-alpha-D-muramoyl-L-alanyl-gamma-D-glutamyl-meso-2,6-diaminopimeloyl-D-alanyl-D-alanine + di-trans,octa-cis-undecaprenyl phosphate = di-trans,octa-cis-undecaprenyl diphospho-N-acetyl-alpha-D-muramoyl-L-alanyl-D-glutamyl-meso-2,6-diaminopimeloyl-D-alanyl-D-alanine + UMP. Its pathway is cell wall biogenesis; peptidoglycan biosynthesis. Its function is as follows. Catalyzes the initial step of the lipid cycle reactions in the biosynthesis of the cell wall peptidoglycan: transfers peptidoglycan precursor phospho-MurNAc-pentapeptide from UDP-MurNAc-pentapeptide onto the lipid carrier undecaprenyl phosphate, yielding undecaprenyl-pyrophosphoryl-MurNAc-pentapeptide, known as lipid I. This Bacillus anthracis protein is Phospho-N-acetylmuramoyl-pentapeptide-transferase.